A 359-amino-acid chain; its full sequence is Alanine racemase (359 aa).

Lysine 35 functions as the Proton acceptor; specific for D-alanine in the catalytic mechanism. An N6-(pyridoxal phosphate)lysine modification is found at lysine 35. Substrate is bound at residue arginine 130. Tyrosine 255 (proton acceptor; specific for L-alanine) is an active-site residue. Methionine 303 is a binding site for substrate.

This sequence belongs to the alanine racemase family. Pyridoxal 5'-phosphate serves as cofactor.

It catalyses the reaction L-alanine = D-alanine. Its pathway is amino-acid biosynthesis; D-alanine biosynthesis; D-alanine from L-alanine: step 1/1. In terms of biological role, catalyzes the interconversion of L-alanine and D-alanine. May also act on other amino acids. In Janthinobacterium sp. (strain Marseille) (Minibacterium massiliensis), this protein is Alanine racemase (alr).